Consider the following 671-residue polypeptide: Synaptotagmin-like protein 4 (671 aa).

The region spanning 4 to 122 (LLDLSFLSEE…KATGDWFYDQ (119 aa)) is the RabBD domain. The segment at 63–105 (CARCQESLGRLSPKTNTCRGCNHLVCRDCRIQESNGTWRCKVC) adopts an FYVE-type zinc-finger fold. A disordered region spans residues 199-243 (SESLDSFTADSDSTSRRDSLDKSGLFPEWKKMSAPKSQVEKETQP). Ser201, Ser204, Ser217, Ser221, Ser274, and Ser289 each carry phosphoserine. Residues 356–478 (VTGRIAFSLK…KLDKKLDHCL (123 aa)) form the C2 1 domain. Ser488 carries the phosphoserine modification. In terms of domain architecture, C2 2 spans 507 to 633 (PASKTPVGGD…ISNGEVVDWM (127 aa)).

Part of a ternary complex containing STX1A and RAB27A. Can bind both dominant negative and dominant active mutants of RAB27A. Binds STXBP1, RAB3A, RAB8A and RAB27B. Interacts with MYO5A.

The protein resides in the membrane. It localises to the cell membrane. It is found in the cytoplasmic vesicle. Its subcellular location is the secretory vesicle membrane. Modulates exocytosis of dense-core granules and secretion of hormones in the pancreas and the pituitary. Interacts with vesicles containing negatively charged phospholipids in a Ca(2+)-independent manner. This Homo sapiens (Human) protein is Synaptotagmin-like protein 4 (SYTL4).